The sequence spans 579 residues: SLAIN motif-containing protein 1 (579 aa).

6 disordered regions span residues 1–21, 60–95, 135–162, 233–258, 289–313, and 347–454; these read MMAEQVKCASPVAASGAGPGP, LLLQPPPPSAPPPAGACSPLATHRAPASTTSPGPGA, GGGGSPEPGTAGTPPGEAATPPLPPPTL, YTSRGSPLSPQSSIDSELSTSELEDD, STSASVSRNSSSVSLSSGKKGTCSD, and IPHS…PGQI. Low complexity predominate over residues 9 to 21; the sequence is ASPVAASGAGPGP. The stretch at 21–56 forms a coiled coil; sequence PVVNAELEVKKLQELVRKLEKQNEQLRSRAASAAAA. The span at 63–73 shows a compositional bias: pro residues; the sequence is QPPPPSAPPPA. A compositionally biased stretch (low complexity) spans 141-154; sequence EPGTAGTPPGEAAT. Residues 233–243 show a composition bias toward polar residues; it reads YTSRGSPLSPQ. Residue S241 is modified to Phosphoserine. Low complexity-rich tracts occupy residues 244-253 and 289-305; these read SSIDSELSTS and STSASVSRNSSSVSLSS. Positions 362-373 are enriched in polar residues; the sequence is SPSTQYFPSNNF. Residues 374 to 390 show a composition bias toward low complexity; that stretch reads QQPQYYPPQAQTADQQP. A compositionally biased stretch (polar residues) spans 412 to 432; it reads AAASSNLSSPVTVRSSQSFDS. The residue at position 469 (R469) is an Asymmetric dimethylarginine. Residues 479-516 form a disordered region; it reads SPTVQGSSSSGSSGSSGGSGSGMPLSNGTQLYSTTGIP. Polar residues predominate over residues 502–516; it reads PLSNGTQLYSTTGIP. Residue R554 is modified to Asymmetric dimethylarginine.

This sequence belongs to the SLAIN motif-containing family. In terms of assembly, interacts with MAPRE1, MAPRE2, MAPRE3 and CKAP5. Interacts with ZDHHC17 (via ANK repeats). In terms of tissue distribution, expressed in embryonic stem cells. Expressed in adult bone marrow, brain, kidney, lung, testis and thymus. Expressed in colon. Isoform 1 is highly expressed in brain. Isoform 2 is more widely expressed in bone marrow, brain, colon, kidney, lung and thymus.

It localises to the cytoplasm. The protein localises to the cytoskeleton. Its function is as follows. Microtubule plus-end tracking protein that might be involved in the regulation of cytoplasmic microtubule dynamics, microtubule organization and microtubule elongation. This Mus musculus (Mouse) protein is SLAIN motif-containing protein 1 (Slain1).